The primary structure comprises 154 residues: Endoribonuclease YbeY (154 aa).

Zn(2+)-binding residues include His114, His118, and His124.

It belongs to the endoribonuclease YbeY family. Zn(2+) serves as cofactor.

It is found in the cytoplasm. In terms of biological role, single strand-specific metallo-endoribonuclease involved in late-stage 70S ribosome quality control and in maturation of the 3' terminus of the 16S rRNA. The polypeptide is Endoribonuclease YbeY (Aggregatibacter actinomycetemcomitans (Actinobacillus actinomycetemcomitans)).